The chain runs to 181 residues: ATP-dependent protease subunit HslV (181 aa).

T7 is an active-site residue. The Na(+) site is built by A162, C165, and T168.

The protein belongs to the peptidase T1B family. HslV subfamily. In terms of assembly, a double ring-shaped homohexamer of HslV is capped on each side by a ring-shaped HslU homohexamer. The assembly of the HslU/HslV complex is dependent on binding of ATP.

The protein resides in the cytoplasm. It catalyses the reaction ATP-dependent cleavage of peptide bonds with broad specificity.. With respect to regulation, allosterically activated by HslU binding. Protease subunit of a proteasome-like degradation complex believed to be a general protein degrading machinery. The protein is ATP-dependent protease subunit HslV of Coxiella burnetii (strain Dugway 5J108-111).